The chain runs to 993 residues: Nisin biosynthesis protein NisB (993 aa).

The chain crosses the membrane as a helical span at residues 838 to 851; the sequence is AIFCADSKIIPNLL.

To B.subtilis SpaB and S.epidermidis EpiB.

The protein resides in the cell membrane. In terms of biological role, involved in the post-translational modification of the lantibiotic nisin. The protein is Nisin biosynthesis protein NisB (nisB) of Lactococcus lactis subsp. lactis (Streptococcus lactis).